Here is a 491-residue protein sequence, read N- to C-terminus: Anhydromuropeptide permease (491 aa).

Over 1–11 (MSSQYLRIFQQ) the chain is Cytoplasmic. The chain crosses the membrane as a helical span at residues 12-32 (PRSAILLILGFASGLPLALTS). The Periplasmic portion of the chain corresponds to 33–47 (GTLQAWMTVENIDLK). The helical transmembrane segment at 48–61 (TIGFFSLVGQAYVF) threads the bilayer. The Cytoplasmic portion of the chain corresponds to 62–81 (KFLWSPLMDRYTPPFFGRRR). Residues 82 to 105 (GWLLATQILLLVAIAAMGFLEPGT) traverse the membrane as a helical segment. Position 106 (glutamine 106) is a topological domain, periplasmic. A helical transmembrane segment spans residues 107–124 (LRWMAALAVVIAFCSASQ). Topologically, residues 125–221 (DIVFDAWKTD…VAPLRDFFGR (97 aa)) are cytoplasmic. Residues 222–240 (NNAWLILLLIVLYKLGDAF) form a helical membrane-spanning segment. The Periplasmic portion of the chain corresponds to 241–264 (AMSLTTTFLIRGVGFDAGEVGVVN). Residues 265–284 (KTLGLLATIVGALYGGILMQ) form a helical membrane-spanning segment. At 285 to 287 (RLS) the chain is on the cytoplasmic side. A helical membrane pass occupies residues 288-303 (LFRALLIFGILQGASN). The Periplasmic portion of the chain corresponds to 304–327 (AGYWLLSITDKHLYSMGAAVFFEN). Residues 328–346 (LCGGMGTSAFVALLMTLCN) traverse the membrane as a helical segment. The Cytoplasmic segment spans residues 347-421 (KSFSATQFAL…NDNFISRTAY (75 aa)). A helical transmembrane segment spans residues 422–453 (PAGYAFAMWTLAAGVSLLAVWLLLLTMDALDL). Residues 454-457 (THFS) lie on the Periplasmic side of the membrane. Residues 458-485 (FLPALLEVGVLVALSGVVLGGLLDYLAL) form a helical membrane-spanning segment. The Cytoplasmic segment spans residues 486-491 (RKTHLT).

Belongs to the major facilitator superfamily.

The protein resides in the cell inner membrane. Its function is as follows. Permease involved in cell wall peptidoglycan recycling. Transports, from the periplasm into the cytoplasm, the disaccharide N-acetylglucosaminyl-beta-1,4-anhydro-N-acetylmuramic acid (GlcNAc-anhMurNAc) and GlcNAc-anhMurNAc-peptides. Transport is dependent on the proton motive force. The sequence is that of Anhydromuropeptide permease (ampG) from Escherichia coli O157:H7.